Here is a 431-residue protein sequence, read N- to C-terminus: Serine/threonine-protein kinase Sgk1 (431 aa).

Residues Met-1 to Met-60 are necessary for localization to the mitochondria. Residues Glu-65–His-92 form a disordered region. Ser-74 carries the post-translational modification Phosphoserine. Ser-78 is subject to Phosphoserine; by MAPK7. Residues Gln-81–Pro-91 show a composition bias toward polar residues. Positions Phe-98–Phe-355 constitute a Protein kinase domain. ATP-binding positions include Ile-104–Val-112 and Lys-127. Residues Lys-131 to Lys-141 carry the Nuclear localization signal motif. Asp-222 (proton acceptor) is an active-site residue. Thr-256 is modified (phosphothreonine; by PDPK1). The region spanning Ser-356–Leu-431 is the AGC-kinase C-terminal domain. Thr-369 bears the Phosphothreonine; by PKA mark. Phosphoserine occurs at positions 397, 401, and 422.

Belongs to the protein kinase superfamily. AGC Ser/Thr protein kinase family. In terms of assembly, homodimer; disulfide-linked. Interacts with MAPK3/ERK1, MAPK1/ERK2, MAP2K1/MEK1, MAP2K2/MEK2, NEDD4, NEDD4L, MAPT/TAU, MAPK7, CREB1, SLC9A3R2/NHERF2 and KCNJ1/ROMK1. Forms a trimeric complex with FBXW7 and NOTCH1 Associates with the mammalian target of rapamycin complex 2 (mTORC2) via an interaction with MAPKAP1/SIN1. In terms of processing, regulated by phosphorylation. Activated by phosphorylation on Ser-422 by mTORC2, transforming it into a substrate for PDPK1 which phosphorylates it on Thr-256. Phosphorylation on Ser-397 and Ser-401 are also essential for its activity. Phosphorylation on Ser-78 by MAPK7 is required for growth factor-induced cell cycle progression. Ubiquitinated by NEDD4L; which promotes proteasomal degradation. Ubiquitinated by SYVN1 at the endoplasmic reticulum; which promotes rapid proteasomal degradation and maintains a high turnover rate in resting cells.

The protein resides in the cytoplasm. It localises to the nucleus. The protein localises to the endoplasmic reticulum membrane. Its subcellular location is the cell membrane. It is found in the mitochondrion. The catalysed reaction is L-seryl-[protein] + ATP = O-phospho-L-seryl-[protein] + ADP + H(+). It catalyses the reaction L-threonyl-[protein] + ATP = O-phospho-L-threonyl-[protein] + ADP + H(+). Its activity is regulated as follows. Two specific sites, one in the kinase domain (Thr-256) and the other in the C-terminal regulatory region (Ser-422), need to be phosphorylated for its full activation. Phosphorylation at Ser-397 and Ser-401 are also essential for its activity. Activated by WNK1, WNK2, WNK3 and WNK4; which promote phosphorylation by mTORC2. Functionally, serine/threonine-protein kinase which is involved in the regulation of a wide variety of ion channels, membrane transporters, cellular enzymes, transcription factors, neuronal excitability, cell growth, proliferation, survival, migration and apoptosis. Plays an important role in cellular stress response. Contributes to regulation of renal Na(+) retention, renal K(+) elimination, salt appetite, gastric acid secretion, intestinal Na(+)/H(+) exchange and nutrient transport, insulin-dependent salt sensitivity of blood pressure, salt sensitivity of peripheral glucose uptake, cardiac repolarization and memory consolidation. Up-regulates Na(+) channels: SCNN1A/ENAC, SCN5A and ASIC1/ACCN2, K(+) channels: KCNJ1/ROMK1, KCNA1-5, KCNQ1-5 and KCNE1, epithelial Ca(2+) channels: TRPV5 and TRPV6, chloride channels: BSND, CLCN2 and CFTR, glutamate transporters: SLC1A3/EAAT1, SLC1A2 /EAAT2, SLC1A1/EAAT3, SLC1A6/EAAT4 and SLC1A7/EAAT5, amino acid transporters: SLC1A5/ASCT2, SLC38A1/SN1 and SLC6A19, creatine transporter: SLC6A8, Na(+)/dicarboxylate cotransporter: SLC13A2/NADC1, Na(+)-dependent phosphate cotransporter: SLC34A2/NAPI-2B, glutamate receptor: GRIK2/GLUR6. Up-regulates carriers: SLC9A3/NHE3, SLC12A1/NKCC2, SLC12A3/NCC, SLC5A3/SMIT, SLC2A1/GLUT1, SLC5A1/SGLT1 and SLC15A2/PEPT2. Regulates enzymes: GSK3A/B, PMM2 and Na(+)/K(+) ATPase, and transcription factors: CTNNB1 and nuclear factor NF-kappa-B. Stimulates sodium transport into epithelial cells by enhancing the stability and expression of SCNN1A/ENAC. This is achieved by phosphorylating the NEDD4L ubiquitin E3 ligase, promoting its interaction with 14-3-3 proteins, thereby preventing it from binding to SCNN1A/ENAC and targeting it for degradation. Regulates store-operated Ca(+2) entry (SOCE) by stimulating ORAI1 and STIM1. Regulates KCNJ1/ROMK1 directly via its phosphorylation or indirectly via increased interaction with SLC9A3R2/NHERF2. Phosphorylates MDM2 and activates MDM2-dependent ubiquitination of p53/TP53. Phosphorylates MAPT/TAU and mediates microtubule depolymerization and neurite formation in hippocampal neurons. Phosphorylates SLC2A4/GLUT4 and up-regulates its activity. Phosphorylates APBB1/FE65 and promotes its localization to the nucleus. Phosphorylates MAPK1/ERK2 and activates it by enhancing its interaction with MAP2K1/MEK1 and MAP2K2/MEK2. Phosphorylates FBXW7 and plays an inhibitory role in the NOTCH1 signaling. Phosphorylates FOXO1 resulting in its relocalization from the nucleus to the cytoplasm. Phosphorylates FOXO3, promoting its exit from the nucleus and interference with FOXO3-dependent transcription. Phosphorylates BRAF and MAP3K3/MEKK3 and inhibits their activity. Phosphorylates SLC9A3/NHE3 in response to dexamethasone, resulting in its activation and increased localization at the cell membrane. Phosphorylates CREB1. Necessary for vascular remodeling during angiogenesis. The polypeptide is Serine/threonine-protein kinase Sgk1 (Sgk1) (Mus musculus (Mouse)).